The primary structure comprises 573 residues: MLO-like protein 11 (573 aa).

The Extracellular portion of the chain corresponds to 1 to 19 (MGEGEENGNEADSNERSLA). Residues 20 to 40 (LSPTWSVAIVLTVFVVVSLIV) traverse the membrane as a helical segment. Over 41–69 (ERSIYRLSTWLRKTKRKPMFAALEKMKEE) the chain is Cytoplasmic. Residues 70-90 (LMLLGFISLLLTATSSTIANI) form a helical membrane-spanning segment. Residues 91 to 163 (CVPSSFYNDR…SYEGLEQLHR (73 aa)) lie on the Extracellular side of the membrane. Residues 164 to 184 (FIFIMAVTHVTYSCLTMLLAI) form a helical membrane-spanning segment. The Cytoplasmic segment spans residues 185 to 287 (VKIHSWRIWE…IRSMEEEFQR (103 aa)). A run of 2 helical transmembrane segments spans residues 288–308 (IVGV…FNIK) and 309–329 (GSNL…LVGA). Topologically, residues 330-371 (KLQHVIATLALENAGLTEYPSGVKLRPRDELFWFNKPELLLS) are cytoplasmic. The chain crosses the membrane as a helical span at residues 372–392 (LIHFILFQNSFELASFFWFWW). Topologically, residues 393–411 (QFGYSSCFLKNHYLVYFRL) are extracellular. The chain crosses the membrane as a helical span at residues 412–432 (LLGFAGQFLCSYSTLPLYALV). The Cytoplasmic portion of the chain corresponds to 433–573 (TQMGTNYKAA…SSSLPSEKRV (141 aa)). The tract at residues 446-467 (QRIRETIRGWGKATRRKRRHGL) is calmodulin-binding. 2 disordered regions span residues 500–532 (EQQR…TSSR) and 554–573 (RSEP…EKRV). Residues 507–516 (EQGTTELELQ) show a composition bias toward low complexity. The span at 561–573 (LSRSSSLPSEKRV) shows a compositional bias: polar residues.

The protein belongs to the MLO family.

The protein resides in the membrane. May be involved in modulation of pathogen defense and leaf cell death. Activity seems to be regulated by Ca(2+)-dependent calmodulin binding and seems not to require heterotrimeric G proteins. This chain is MLO-like protein 11 (MLO11), found in Arabidopsis thaliana (Mouse-ear cress).